We begin with the raw amino-acid sequence, 428 residues long: Light-independent protochlorophyllide reductase subunit N (428 aa).

Residues Cys-31, Cys-56, and Cys-117 each contribute to the [4Fe-4S] cluster site.

Belongs to the BchN/ChlN family. As to quaternary structure, protochlorophyllide reductase is composed of three subunits; BchL, BchN and BchB. Forms a heterotetramer of two BchB and two BchN subunits. [4Fe-4S] cluster is required as a cofactor.

The enzyme catalyses chlorophyllide a + oxidized 2[4Fe-4S]-[ferredoxin] + 2 ADP + 2 phosphate = protochlorophyllide a + reduced 2[4Fe-4S]-[ferredoxin] + 2 ATP + 2 H2O. Its pathway is porphyrin-containing compound metabolism; bacteriochlorophyll biosynthesis (light-independent). In terms of biological role, component of the dark-operative protochlorophyllide reductase (DPOR) that uses Mg-ATP and reduced ferredoxin to reduce ring D of protochlorophyllide (Pchlide) to form chlorophyllide a (Chlide). This reaction is light-independent. The NB-protein (BchN-BchB) is the catalytic component of the complex. The protein is Light-independent protochlorophyllide reductase subunit N of Rhodopseudomonas palustris (strain BisB5).